Here is a 280-residue protein sequence, read N- to C-terminus: 2-dehydro-3-deoxyphosphooctonate aldolase (280 aa).

It belongs to the KdsA family.

The protein localises to the cytoplasm. It catalyses the reaction D-arabinose 5-phosphate + phosphoenolpyruvate + H2O = 3-deoxy-alpha-D-manno-2-octulosonate-8-phosphate + phosphate. The protein operates within carbohydrate biosynthesis; 3-deoxy-D-manno-octulosonate biosynthesis; 3-deoxy-D-manno-octulosonate from D-ribulose 5-phosphate: step 2/3. It functions in the pathway bacterial outer membrane biogenesis; lipopolysaccharide biosynthesis. The sequence is that of 2-dehydro-3-deoxyphosphooctonate aldolase from Rhizobium meliloti (strain 1021) (Ensifer meliloti).